A 142-amino-acid polypeptide reads, in one-letter code: Large ribosomal subunit protein bL17 (142 aa).

The protein belongs to the bacterial ribosomal protein bL17 family. As to quaternary structure, part of the 50S ribosomal subunit. Contacts protein L32.

This chain is Large ribosomal subunit protein bL17, found in Brucella canis (strain ATCC 23365 / NCTC 10854 / RM-666).